A 221-amino-acid chain; its full sequence is Endo-1,4-beta-xylanase I (221 aa).

The signal sequence occupies residues 1–30 (MVSFTSIITAAVAATGALAAPATDVSLVAR). Residues 31 to 219 (QNTPNGEGTH…STGNAQITVN (189 aa)) enclose the GH11 domain. The active-site Nucleophile is the Glu115. Residues 126–157 (DPSSQSQNKGTVTSDGSSYKIAQSTRTNQPSI) form a disordered region. Glu206 serves as the catalytic Proton donor.

Belongs to the glycosyl hydrolase 11 (cellulase G) family. The N-terminus is blocked.

The protein localises to the secreted. It catalyses the reaction Endohydrolysis of (1-&gt;4)-beta-D-xylosidic linkages in xylans.. It functions in the pathway glycan degradation; xylan degradation. In terms of biological role, major xylan-degrading enzyme. Contributes to the hydrolysis of arabinoxylan, the major component of maize cell-walls. This chain is Endo-1,4-beta-xylanase I (XYL1), found in Cochliobolus carbonum (Maize leaf spot fungus).